The sequence spans 505 residues: Pup deamidase/depupylase (505 aa).

Gly6 to Glu10 provides a ligand contact to ATP. Mg(2+)-binding residues include Glu8 and Tyr93. Asp95 (proton acceptor) is an active-site residue. Glu100 is a Mg(2+) binding site. Ser102–Ala103 is a binding site for ATP. Position 156 (His156) interacts with Mg(2+). 2 residues coordinate ATP: Asn158 and Arg240. A Mg(2+)-binding site is contributed by His242.

It belongs to the Pup ligase/Pup deamidase family. Pup deamidase subfamily. Interacts with the prokaryotic ubiquitin-like protein Pup. Requires ATP as cofactor.

It carries out the reaction [prokaryotic ubiquitin-like protein]-C-terminal-L-glutamine + H2O = [prokaryotic ubiquitin-like protein]-C-terminal-L-glutamate + NH4(+). It participates in protein degradation; proteasomal Pup-dependent pathway. Its function is as follows. Specifically catalyzes the deamidation of the C-terminal glutamine of the prokaryotic ubiquitin-like protein Pup to glutamate, thereby rendering Pup competent for conjugation. Also displays depupylase (DPUP) activity, removing conjugated Pup from target proteins; is thus involved in the recycling of Pup and may function similarly to deubiquitinases (DUBs) in eukaryotes to prevent or promote proteasomal degradation of certain proteins. The sequence is that of Pup deamidase/depupylase (dop) from Mycobacterium tuberculosis (strain CDC 1551 / Oshkosh).